The primary structure comprises 159 residues: 2-C-methyl-D-erythritol 2,4-cyclodiphosphate synthase (159 aa).

Residues aspartate 8 and histidine 10 each coordinate a divalent metal cation. Residues 8–10 (DVH) and 34–35 (HS) contribute to the 4-CDP-2-C-methyl-D-erythritol 2-phosphate site. Residue histidine 42 participates in a divalent metal cation binding. 4-CDP-2-C-methyl-D-erythritol 2-phosphate-binding positions include 56–58 (DIG), 61–65 (FPDTD), 100–106 (AQAPKMA), 132–135 (TTTE), phenylalanine 139, and arginine 142.

Belongs to the IspF family. As to quaternary structure, homotrimer. A divalent metal cation serves as cofactor.

It catalyses the reaction 4-CDP-2-C-methyl-D-erythritol 2-phosphate = 2-C-methyl-D-erythritol 2,4-cyclic diphosphate + CMP. It participates in isoprenoid biosynthesis; isopentenyl diphosphate biosynthesis via DXP pathway; isopentenyl diphosphate from 1-deoxy-D-xylulose 5-phosphate: step 4/6. Functionally, involved in the biosynthesis of isopentenyl diphosphate (IPP) and dimethylallyl diphosphate (DMAPP), two major building blocks of isoprenoid compounds. Catalyzes the conversion of 4-diphosphocytidyl-2-C-methyl-D-erythritol 2-phosphate (CDP-ME2P) to 2-C-methyl-D-erythritol 2,4-cyclodiphosphate (ME-CPP) with a corresponding release of cytidine 5-monophosphate (CMP). The sequence is that of 2-C-methyl-D-erythritol 2,4-cyclodiphosphate synthase from Cronobacter sakazakii (strain ATCC BAA-894) (Enterobacter sakazakii).